The sequence spans 97 residues: uncharacterized protein (97 aa).

This is an uncharacterized protein from Geobacillus stearothermophilus (Bacillus stearothermophilus).